The sequence spans 177 residues: Trafficking regulator of GLUT4 1 (177 aa).

The Cytoplasmic segment spans residues 1 to 105 (MAHPVQSEFP…QDQEAPRDYL (105 aa)). Phosphoserine is present on residues serine 48, serine 87, and serine 88. The disordered stretch occupies residues 71–92 (EAPLPRSPSRASSRRASSIATT). Positions 72–88 (APLPRSPSRASSRRASS) are enriched in low complexity. The helical intramembrane region spans 106–126 (ILAVVACFCPVWPLNLIPLII). The Cytoplasmic segment spans residues 127 to 153 (SIMSRSSMQQGNVDGARRLGRLARLLS). Residues 154-174 (ITLIIMGIVIIMVAVTVNFTV) traverse the membrane as a helical segment. Over 175–177 (QKK) the chain is Extracellular.

Belongs to the CD225/Dispanin family. Interacts with SLC2A4; the interaction is required for proper SLC2A4 reacycling after insulin stimulation. In terms of tissue distribution, expressed at high levels in heart, mammary gland, adrenal gland, stomach, smooth muscle and skeletal muscle, and at lower levels in brain and lung. Strongly down-regulated in lung cancer tissues, due to hypermethylation of the corresponding locus. Expressed in adipose tissue.

Its subcellular location is the cell membrane. The protein resides in the endomembrane system. It is found in the cytoplasm. The protein localises to the perinuclear region. Functionally, regulates insulin-mediated adipose tissue glucose uptake and transport by modulation of SLC2A4 recycling. Not required for SLC2A4 membrane fusion upon an initial stimulus, but rather is necessary for proper protein recycling during prolonged insulin stimulation. The chain is Trafficking regulator of GLUT4 1 from Homo sapiens (Human).